We begin with the raw amino-acid sequence, 177 residues long: ATP synthase subunit delta (177 aa).

This sequence belongs to the ATPase delta chain family. In terms of assembly, F-type ATPases have 2 components, F(1) - the catalytic core - and F(0) - the membrane proton channel. F(1) has five subunits: alpha(3), beta(3), gamma(1), delta(1), epsilon(1). F(0) has three main subunits: a(1), b(2) and c(10-14). The alpha and beta chains form an alternating ring which encloses part of the gamma chain. F(1) is attached to F(0) by a central stalk formed by the gamma and epsilon chains, while a peripheral stalk is formed by the delta and b chains.

The protein localises to the cell inner membrane. F(1)F(0) ATP synthase produces ATP from ADP in the presence of a proton or sodium gradient. F-type ATPases consist of two structural domains, F(1) containing the extramembraneous catalytic core and F(0) containing the membrane proton channel, linked together by a central stalk and a peripheral stalk. During catalysis, ATP synthesis in the catalytic domain of F(1) is coupled via a rotary mechanism of the central stalk subunits to proton translocation. Its function is as follows. This protein is part of the stalk that links CF(0) to CF(1). It either transmits conformational changes from CF(0) to CF(1) or is implicated in proton conduction. The sequence is that of ATP synthase subunit delta from Neisseria gonorrhoeae (strain NCCP11945).